The sequence spans 398 residues: Succinate--CoA ligase [ADP-forming] subunit beta (398 aa).

The region spanning 9-253 is the ATP-grasp domain; the sequence is KEILASYGVR…IREENPIEVE (245 aa). Residues Lys50, 57–59, Val106, and Glu116 each bind ATP; that span reads GRG. Mg(2+) is bound by residues Asn208 and Asp222. Substrate is bound by residues Asn273 and 330–332; that span reads GIV.

This sequence belongs to the succinate/malate CoA ligase beta subunit family. Heterotetramer of two alpha and two beta subunits. Requires Mg(2+) as cofactor.

The catalysed reaction is succinate + ATP + CoA = succinyl-CoA + ADP + phosphate. It catalyses the reaction GTP + succinate + CoA = succinyl-CoA + GDP + phosphate. It participates in carbohydrate metabolism; tricarboxylic acid cycle; succinate from succinyl-CoA (ligase route): step 1/1. In terms of biological role, succinyl-CoA synthetase functions in the citric acid cycle (TCA), coupling the hydrolysis of succinyl-CoA to the synthesis of either ATP or GTP and thus represents the only step of substrate-level phosphorylation in the TCA. The beta subunit provides nucleotide specificity of the enzyme and binds the substrate succinate, while the binding sites for coenzyme A and phosphate are found in the alpha subunit. The polypeptide is Succinate--CoA ligase [ADP-forming] subunit beta (Flavobacterium psychrophilum (strain ATCC 49511 / DSM 21280 / CIP 103535 / JIP02/86)).